The chain runs to 721 residues: Fatty acid oxidation complex subunit alpha (721 aa).

Positions 1 to 190 (MIYEGKAITV…KVGAVDAVVA (190 aa)) are enoyl-CoA hydratase/isomerase. Aspartate 297 contacts substrate. Residues 312 to 721 (KDVKQAAVLG…SFFGQASSEE (410 aa)) form a 3-hydroxyacyl-CoA dehydrogenase region. NAD(+)-binding positions include methionine 325, aspartate 344, 401–403 (VVE), lysine 408, and serine 430. Histidine 451 (for 3-hydroxyacyl-CoA dehydrogenase activity) is an active-site residue. Asparagine 454 is a binding site for NAD(+). Substrate-binding residues include asparagine 501 and tyrosine 660.

The protein in the N-terminal section; belongs to the enoyl-CoA hydratase/isomerase family. This sequence in the C-terminal section; belongs to the 3-hydroxyacyl-CoA dehydrogenase family. As to quaternary structure, heterotetramer of two alpha chains (FadB) and two beta chains (FadA).

The enzyme catalyses a (3S)-3-hydroxyacyl-CoA + NAD(+) = a 3-oxoacyl-CoA + NADH + H(+). It carries out the reaction a (3S)-3-hydroxyacyl-CoA = a (2E)-enoyl-CoA + H2O. It catalyses the reaction a 4-saturated-(3S)-3-hydroxyacyl-CoA = a (3E)-enoyl-CoA + H2O. The catalysed reaction is (3S)-3-hydroxybutanoyl-CoA = (3R)-3-hydroxybutanoyl-CoA. The enzyme catalyses a (3Z)-enoyl-CoA = a 4-saturated (2E)-enoyl-CoA. It carries out the reaction a (3E)-enoyl-CoA = a 4-saturated (2E)-enoyl-CoA. The protein operates within lipid metabolism; fatty acid beta-oxidation. Functionally, involved in the aerobic and anaerobic degradation of long-chain fatty acids via beta-oxidation cycle. Catalyzes the formation of 3-oxoacyl-CoA from enoyl-CoA via L-3-hydroxyacyl-CoA. It can also use D-3-hydroxyacyl-CoA and cis-3-enoyl-CoA as substrate. This is Fatty acid oxidation complex subunit alpha from Pseudomonas syringae pv. syringae (strain B728a).